A 427-amino-acid polypeptide reads, in one-letter code: Glutamate-1-semialdehyde 2,1-aminomutase (427 aa).

Lys-268 is subject to N6-(pyridoxal phosphate)lysine.

The protein belongs to the class-III pyridoxal-phosphate-dependent aminotransferase family. HemL subfamily. Pyridoxal 5'-phosphate is required as a cofactor.

The protein resides in the cytoplasm. The enzyme catalyses (S)-4-amino-5-oxopentanoate = 5-aminolevulinate. It participates in porphyrin-containing compound metabolism; protoporphyrin-IX biosynthesis; 5-aminolevulinate from L-glutamyl-tRNA(Glu): step 2/2. The protein is Glutamate-1-semialdehyde 2,1-aminomutase of Methanococcus vannielii (strain ATCC 35089 / DSM 1224 / JCM 13029 / OCM 148 / SB).